The following is a 185-amino-acid chain: Elongation factor P (185 aa).

The protein belongs to the elongation factor P family.

The protein localises to the cytoplasm. Its pathway is protein biosynthesis; polypeptide chain elongation. Involved in peptide bond synthesis. Stimulates efficient translation and peptide-bond synthesis on native or reconstituted 70S ribosomes in vitro. Probably functions indirectly by altering the affinity of the ribosome for aminoacyl-tRNA, thus increasing their reactivity as acceptors for peptidyl transferase. This Burkholderia multivorans (strain ATCC 17616 / 249) protein is Elongation factor P.